Here is a 122-residue protein sequence, read N- to C-terminus: Large ribosomal subunit protein uL14 (122 aa).

This sequence belongs to the universal ribosomal protein uL14 family. As to quaternary structure, part of the 50S ribosomal subunit. Forms a cluster with proteins L3 and L19. In the 70S ribosome, L14 and L19 interact and together make contacts with the 16S rRNA in bridges B5 and B8.

In terms of biological role, binds to 23S rRNA. Forms part of two intersubunit bridges in the 70S ribosome. In Acidovorax sp. (strain JS42), this protein is Large ribosomal subunit protein uL14.